Consider the following 1108-residue polypeptide: Isoleucine--tRNA ligase (1108 aa).

Positions 53–63 (PFANGLPHYGH) match the 'HIGH' region motif. A 'KMSKS' region motif is present at residues 654 to 658 (KLSKR). Lys657 contacts ATP.

It belongs to the class-I aminoacyl-tRNA synthetase family. IleS type 2 subfamily. Monomer. The cofactor is Zn(2+).

Its subcellular location is the cytoplasm. It catalyses the reaction tRNA(Ile) + L-isoleucine + ATP = L-isoleucyl-tRNA(Ile) + AMP + diphosphate. Catalyzes the attachment of isoleucine to tRNA(Ile). As IleRS can inadvertently accommodate and process structurally similar amino acids such as valine, to avoid such errors it has two additional distinct tRNA(Ile)-dependent editing activities. One activity is designated as 'pretransfer' editing and involves the hydrolysis of activated Val-AMP. The other activity is designated 'posttransfer' editing and involves deacylation of mischarged Val-tRNA(Ile). The sequence is that of Isoleucine--tRNA ligase from Rickettsia bellii (strain RML369-C).